Here is a 342-residue protein sequence, read N- to C-terminus: Cell cycle control protein 50C (342 aa).

At Met1–Ser33 the chain is on the cytoplasmic side. Residues Val34 to Leu54 form a helical membrane-spanning segment. The Extracellular segment spans residues Leu55–Gly306. Residues Asn66, Asn80, Asn89, and Asn205 are each glycosylated (N-linked (GlcNAc...) asparagine). A helical membrane pass occupies residues Leu307–Ile327. Over Leu328–Leu342 the chain is Cytoplasmic.

It belongs to the CDC50/LEM3 family. In terms of tissue distribution, specifically expressed in testis.

It is found in the membrane. The polypeptide is Cell cycle control protein 50C (Tmem30c) (Mus musculus (Mouse)).